The primary structure comprises 247 residues: Probable transcriptional regulatory protein Swit_2142 (247 aa).

Basic residues predominate over residues 1 to 14 (MAGHSKFKNIMHRK). Residues 1–21 (MAGHSKFKNIMHRKGAQDKKR) are disordered.

This sequence belongs to the TACO1 family.

It localises to the cytoplasm. The chain is Probable transcriptional regulatory protein Swit_2142 from Rhizorhabdus wittichii (strain DSM 6014 / CCUG 31198 / JCM 15750 / NBRC 105917 / EY 4224 / RW1) (Sphingomonas wittichii).